The sequence spans 213 residues: Pyridoxine/pyridoxamine 5'-phosphate oxidase (213 aa).

Substrate is bound by residues 9–12 (RKDY) and lysine 67. Residues 62–67 (RIVLLK), 77–78 (FT), arginine 83, lysine 84, and glutamine 106 each bind FMN. Substrate-binding residues include tyrosine 124, arginine 128, and serine 132. FMN-binding positions include 141–142 (QS) and tryptophan 186. 192–194 (RLH) is a substrate binding site. Arginine 196 contacts FMN.

Belongs to the pyridoxamine 5'-phosphate oxidase family. As to quaternary structure, homodimer. FMN serves as cofactor.

It catalyses the reaction pyridoxamine 5'-phosphate + O2 + H2O = pyridoxal 5'-phosphate + H2O2 + NH4(+). It carries out the reaction pyridoxine 5'-phosphate + O2 = pyridoxal 5'-phosphate + H2O2. It functions in the pathway cofactor metabolism; pyridoxal 5'-phosphate salvage; pyridoxal 5'-phosphate from pyridoxamine 5'-phosphate: step 1/1. Its pathway is cofactor metabolism; pyridoxal 5'-phosphate salvage; pyridoxal 5'-phosphate from pyridoxine 5'-phosphate: step 1/1. Functionally, catalyzes the oxidation of either pyridoxine 5'-phosphate (PNP) or pyridoxamine 5'-phosphate (PMP) into pyridoxal 5'-phosphate (PLP). This Cyanothece sp. (strain PCC 7425 / ATCC 29141) protein is Pyridoxine/pyridoxamine 5'-phosphate oxidase.